The primary structure comprises 259 residues: MDLLTRTRKINEMLQKTSGQHVNFREMAMTLREAIGSNVFVVSRRGKLLGFSIEEEIENDRMKKMLDERQFPEEYTDGLFKIEDTSANIDVDSEYTAFPVENRDIFKNGLTTIVPIKGGGQRLGTLILSRLNRSFSDDDLILAEYGATVVGMEILHEKTQEIEEEARSKAVVQMAISSLSYSELEAVEHIFEELDGREGLLVASKIADRVGITRSVIVNALRKLESAGVIESRSLGMKGTYIKVLNDKFLLELERMKED.

Residues 1–155 (MDLLTRTRKI…GATVVGMEIL (155 aa)) form a GAF domain region. Residues 203-222 (ASKIADRVGITRSVIVNALR) constitute a DNA-binding region (H-T-H motif). Phosphoserine is present on Ser215.

Belongs to the CodY family.

It is found in the cytoplasm. Its function is as follows. DNA-binding global transcriptional regulator which is involved in the adaptive response to starvation and acts by directly or indirectly controlling the expression of numerous genes in response to nutrient availability. During rapid exponential growth, CodY is highly active and represses genes whose products allow adaptation to nutrient depletion. In Shouchella clausii (strain KSM-K16) (Alkalihalobacillus clausii), this protein is Global transcriptional regulator CodY.